The sequence spans 584 residues: Probable lysosomal cobalamin transporter (584 aa).

The next 10 helical transmembrane spans lie at 8–28, 46–66, 93–113, 144–164, 189–209, 313–333, 350–370, 376–396, 421–441, and 509–529; these read LIWI…STFV, IFTL…VALV, TVVY…IVPF, TLVF…VPVA, ALTF…VIYS, LLGG…MLLT, ILGK…AASV, VIFI…IATI, ATVM…MIVV, and GIVD…VLLI.

Belongs to the LIMR family. LMBRD1 subfamily.

Its subcellular location is the lysosome membrane. Probable lysosomal cobalamin transporter. Required to export cobalamin from lysosomes allowing its conversion to cofactors. This chain is Probable lysosomal cobalamin transporter, found in Coccidioides immitis (strain RS) (Valley fever fungus).